A 271-amino-acid polypeptide reads, in one-letter code: Calcium-binding protein 4 (271 aa).

Residues 1 to 105 (MATEHNVQLV…RSDPQQDAAQ (105 aa)) are disordered. A Phosphoserine; by PKC/PRKCZ modification is found at S37. Over residues 45–67 (GSQKASSGDQSSSQGSEASGSSK) the composition is skewed to low complexity. Residues 87–96 (ASHRHSHRHR) are compositionally biased toward basic residues. EF-hand domains lie at 125–160 (EELEELQAAFEEFDTDQDGYIGYRELGDCMRTLGYM), 179–196 (GFVDFEEFVELISPKLRE), 202–237 (LGVRELRIAFREFDKDRDGRITVAELRQAAPALLGE), and 239–271 (LEGTELDEMLREMDLNGDGTIDFDEFVMMLSTG). Ca(2+) is bound by residues D138, D140, D142, Y144, and E149. 10 residues coordinate Ca(2+): D215, D217, D219, R221, E226, D252, N254, D256, T258, and E263.

Interacts with CACNA1F and CACNA1D (via IQ domain) in a calcium independent manner. Interacts (via N-terminus) with UNC119. Post-translationally, phosphorylated. Phosphorylation levels change with the light conditions and regulate the activity, but has no effect on calcium binding. In terms of tissue distribution, expressed in retina and in the inner hair cells (IHC) of the cochlea.

The protein localises to the cytoplasm. It is found in the presynapse. Its function is as follows. Involved in normal synaptic function through regulation of Ca(2+) influx and neurotransmitter release in photoreceptor synaptic terminals and in auditory transmission. Modulator of CACNA1D and CACNA1F, suppressing the calcium-dependent inactivation and shifting the activation range to more hyperpolarized voltages. In Mus musculus (Mouse), this protein is Calcium-binding protein 4 (Cabp4).